Consider the following 1285-residue polypeptide: Protein crumbs homolog 2 (1285 aa).

Residues 1 to 28 (MALARPGTPDPQALASVLLLLLWAPALS) form the signal peptide. The segment at 1 to 350 (MALARPGTPD…GFQCHCPDGY (350 aa)) is required for maximum inhibition of APP amyloid-beta peptide secretion. Residues 67-106 (EPRGCATQPCHHGALCVPQGPDPTGFRCYCVPGFQGPRCE) enclose the EGF-like 1 domain. Intrachain disulfides connect Cys-71–Cys-82, Cys-76–Cys-94, Cys-96–Cys-105, Cys-112–Cys-123, Cys-117–Cys-132, Cys-134–Cys-143, Cys-150–Cys-161, Cys-155–Cys-170, Cys-172–Cys-181, Cys-188–Cys-199, Cys-193–Cys-208, Cys-210–Cys-220, Cys-227–Cys-238, Cys-232–Cys-247, Cys-249–Cys-258, Cys-265–Cys-276, Cys-270–Cys-306, Cys-308–Cys-317, Cys-324–Cys-335, Cys-329–Cys-344, Cys-346–Cys-355, Cys-362–Cys-373, Cys-367–Cys-382, Cys-384–Cys-393, Cys-400–Cys-411, Cys-405–Cys-424, and Cys-426–Cys-435. One can recognise an EGF-like 2; calcium-binding domain in the interval 108-144 (DIDECASRPCHHGATCRNLADRYECHCPLGYAGVTCE). Residues 146 to 182 (EVDECASAPCLHGGSCLDGVGSFRCVCAPGYGGTRCQ) form the EGF-like 3; calcium-binding domain. Residues 184 to 221 (DLDECQSQPCAHGGTCHDLVNGFRCDCAGTGYEGTHCE) enclose the EGF-like 4; calcium-binding domain. EGF-like domains lie at 223-259 (EVLE…ELCE) and 261-318 (DEDE…ADCG). Asn-235 is a glycosylation site (N-linked (GlcNAc...) asparagine). Ser-267 carries an O-linked (Glc...) serine glycan. The EGF-like 7; calcium-binding domain maps to 320 to 356 (EVDECASRPCLNGGHCQDLPNGFQCHCPDGYAGPTCE). The EGF-like 8; calcium-binding domain maps to 358–394 (DVDECLSDPCLHGGTCSDTVAGYICRCPETWGGRDCS). The 41-residue stretch at 396–436 (QLTGCQGHTCPLAATCIPIFESGVHSYVCHCPPGTHGPFCG) folds into the EGF-like 9 domain. The Laminin G-like 1 domain maps to 431-603 (HGPFCGQNTT…DLGENVLLGC (173 aa)). Asn-438 and Asn-478 each carry an N-linked (GlcNAc...) asparagine glycan. 4 cysteine pairs are disulfide-bonded: Cys-579–Cys-603, Cys-609–Cys-620, Cys-614–Cys-629, and Cys-631–Cys-640. The EGF-like 10 domain maps to 605 to 641 (RREQCRPLPCVHGGSCVDLWTHFRCDCARPHRGPTCA). One can recognise a Laminin G-like 2 domain in the interval 647 to 805 (ATFGLGGAPS…RQSWNLTAGC (159 aa)). Residues Asn-669, Asn-690, Asn-786, and Asn-800 are each glycosylated (N-linked (GlcNAc...) asparagine). 4 disulfide bridges follow: Cys-766–Cys-805, Cys-811–Cys-822, Cys-816–Cys-831, and Cys-833–Cys-842. The EGF-like 11 domain occupies 807–843 (SEDMCSPDPCFNGGTCLVTWNDFHCTCPANFTGPTCA). 4 N-linked (GlcNAc...) asparagine glycosylation sites follow: Asn-836, Asn-886, Asn-926, and Asn-1009. One can recognise a Laminin G-like 3 domain in the interval 871–1054 (EATFREGPPA…PGTPAPILGC (184 aa)). Disulfide bonds link Cys-1013/Cys-1054, Cys-1060/Cys-1071, Cys-1065/Cys-1080, Cys-1082/Cys-1091, Cys-1098/Cys-1108, Cys-1103/Cys-1118, Cys-1120/Cys-1129, Cys-1138/Cys-1150, Cys-1144/Cys-1159, Cys-1161/Cys-1170, Cys-1177/Cys-1188, Cys-1182/Cys-1197, and Cys-1199/Cys-1208. EGF-like domains follow at residues 1056–1092 (GAPV…PRCE), 1094–1130 (HVDP…PRCR), 1134–1171 (PSKE…QRCQ), and 1173–1209 (PTLP…QFCE). N-linked (GlcNAc...) asparagine glycosylation is found at Asn-1141 and Asn-1158. Residues 1225–1245 (VAVPAACACLLLLLLGLLSGI) traverse the membrane as a helical segment. The interaction with EPB41L5 stretch occupies residues 1249-1285 (RKRRQSEGTYSPSQQEVAGARLEMDSVLKVPPEERLI).

It belongs to the Crumbs protein family. Associates with the gamma-secretase complex via interaction (via the transmembrane domain) with PSEN1/PS1. Interacts (via intracellular domain) with EPB41L5. Interacts with PALS1. Post-translationally, O-glucosylated by POGLUT1 at Ser-267; consists of an O-glucose trisaccharide, in which the O-glucose is elongated by the addition of two xylose residues. O-glucosylation is required for localization at the plasma membrane. In terms of processing, N-glycosylated. As to expression, expressed in glomeruli, podocytes of the glomerular capillary loops, and parietal glomerular epithelial cells in the kidney (at protein level). Expressed in retina, fetal eye and brain. Also expressed in kidney, RPE/choroid, and at low levels in lung, placenta, and heart.

The protein resides in the apical cell membrane. Its subcellular location is the cytoplasm. It localises to the cell junction. The protein localises to the secreted. Its function is as follows. Apical polarity protein that plays a central role during the epithelial-to-mesenchymal transition (EMT) at gastrulation, when newly specified mesodermal cells move inside the embryo. Acts by promoting cell ingression, the process by which cells leave the epithelial epiblast and move inside the embryo to form a new tissue layer. The anisotropic distribution of CRB2 and MYH10/myosin-IIB at cell edges define which cells will ingress: cells with high apical CRB2 are probably extruded from the epiblast by neighboring cells with high levels of apical MYH10/myosin-IIB. Plays a role in the maintenance of retinal neuroepithelium organization, structural integrity, adhesion, photoreceptor polarity and retinal photoreceptor layer thickness. May play a role in determining the length of cone photoreceptor outer segments and proliferation of late-born progenitor cells. Also required for maintenance of the apical polarity complex during development of the cortex. Inhibits gamma-secretase-dependent cleavage of APP and secretion of amyloid-beta peptide 40 and amyloid-beta peptide 42, and thereby inhibits gamma-secretase-dependent Notch transcription. The polypeptide is Protein crumbs homolog 2 (Homo sapiens (Human)).